The following is a 390-amino-acid chain: 2-oxoisovalerate dehydrogenase subunit beta, mitochondrial (390 aa).

Residues 1–48 constitute a mitochondrion transit peptide; it reads MAAVAARAGGLLWLRAAGAERRRCGLRCAALVQGFLQPGGEDTAQKRR. A thiamine diphosphate-binding site is contributed by Tyr150. K(+) is bound by residues Gly176, Leu178, Thr179, Cys226, and Asp229. At Lys230 the chain carries N6-acetyllysine. Asn231 is a binding site for K(+). An N6-acetyllysine modification is found at Lys239.

As to quaternary structure, heterotetramer of 2 alpha/BCKDHA and 2 beta chains/BCKDHB that forms the branched-chain alpha-keto acid decarboxylase (E1) component of the BCKD complex. The branched-chain alpha-ketoacid dehydrogenase is a large complex composed of three major building blocks E1, E2 and E3. It is organized around E2, a 24-meric cubic core composed of DBT, to which are associated 6 to 12 copies of E1, and approximately 6 copies of the dehydrogenase E3, a DLD dimer. Thiamine diphosphate serves as cofactor.

The protein localises to the mitochondrion matrix. It carries out the reaction N(6)-[(R)-lipoyl]-L-lysyl-[protein] + 3-methyl-2-oxobutanoate + H(+) = N(6)-[(R)-S(8)-2-methylpropanoyldihydrolipoyl]-L-lysyl-[protein] + CO2. Together with BCKDHA forms the heterotetrameric E1 subunit of the mitochondrial branched-chain alpha-ketoacid dehydrogenase (BCKD) complex. The BCKD complex catalyzes the multi-step oxidative decarboxylation of alpha-ketoacids derived from the branched-chain amino-acids valine, leucine and isoleucine producing CO2 and acyl-CoA which is subsequently utilized to produce energy. The E1 subunit catalyzes the first step with the decarboxylation of the alpha-ketoacid forming an enzyme-product intermediate. A reductive acylation mediated by the lipoylamide cofactor of E2 extracts the acyl group from the E1 active site for the next step of the reaction. The chain is 2-oxoisovalerate dehydrogenase subunit beta, mitochondrial from Mus musculus (Mouse).